A 130-amino-acid chain; its full sequence is Large ribosomal subunit protein bL19 (130 aa).

Belongs to the bacterial ribosomal protein bL19 family.

This protein is located at the 30S-50S ribosomal subunit interface and may play a role in the structure and function of the aminoacyl-tRNA binding site. The protein is Large ribosomal subunit protein bL19 of Cupriavidus metallidurans (strain ATCC 43123 / DSM 2839 / NBRC 102507 / CH34) (Ralstonia metallidurans).